The chain runs to 676 residues: Protein timeless (676 aa).

The interval 77-108 is necessary for normal circadian rhythm; that stretch reads VNTLQKLLNLWFEASLSESSEDNESNTSPPKK. Disordered stretches follow at residues 94-145 and 346-398; these read ESSE…CDER and PESI…LVKR. Composition is skewed to low complexity over residues 101-129 and 360-369; these read SNTS…SDNG and QGKPQHQKPP. Residues 388–398 carry the Nuclear localization signal motif; that stretch reads KELRRKKLVKR.

It belongs to the timeless family. In terms of assembly, forms a heterodimer with period (PER); the complex then translocates into the nucleus. Post-translationally, phosphorylated with a circadian rhythmicity.

It localises to the nucleus. Its subcellular location is the cytoplasm. It is found in the perinuclear region. In terms of biological role, required for the production of circadian rhythms. The biological cycle depends on the rhythmic formation and nuclear localization of the TIM-PER complex. Light induces the degradation of TIM, which promotes elimination of PER. Nuclear activity of the heterodimer coordinatively regulates PER and TIM transcription through a negative feedback loop. Behaves as a negative element in circadian transcriptional loop. Does not appear to bind DNA, suggesting indirect transcriptional inhibition. The sequence is that of Protein timeless (tim) from Drosophila hydei (Fruit fly).